The following is a 502-amino-acid chain: 4,4'-diapophytoene desaturase (4,4'-diaponeurosporene-forming) (502 aa).

5-17 (VIGAGVTGLAAAA) lines the FAD pocket.

Belongs to the carotenoid/retinoid oxidoreductase family. CrtN subfamily.

The catalysed reaction is 15-cis-4,4'-diapophytoene + 3 FAD + 3 H(+) = all-trans-4,4'-diaponeurosporene + 3 FADH2. The protein operates within carotenoid biosynthesis; staphyloxanthin biosynthesis; staphyloxanthin from farnesyl diphosphate: step 2/5. In terms of biological role, involved in the biosynthesis of the yellow-orange carotenoid staphyloxanthin, which plays a role in the virulence via its protective function against oxidative stress. Catalyzes three successive dehydrogenation reactions that lead to the introduction of three double bonds into 4,4'-diapophytoene (dehydrosqualene), with 4,4'-diapophytofluene and 4,4'-diapo-zeta-carotene as intermediates, and 4,4'-diaponeurosporene (the major deep-yellow pigment in staphylococci strains) as the end product. This chain is 4,4'-diapophytoene desaturase (4,4'-diaponeurosporene-forming), found in Staphylococcus aureus (strain USA300).